We begin with the raw amino-acid sequence, 283 residues long: Pantothenate synthetase (283 aa).

30-37 lines the ATP pocket; sequence MGALHEGH. His37 functions as the Proton donor in the catalytic mechanism. Gln61 serves as a coordination point for (R)-pantoate. Beta-alanine is bound at residue Gln61. 147-150 is a binding site for ATP; sequence GEKD. Gln153 lines the (R)-pantoate pocket. ATP contacts are provided by residues Ile176 and 184–187; that span reads VSSR.

This sequence belongs to the pantothenate synthetase family. As to quaternary structure, homodimer.

The protein resides in the cytoplasm. It carries out the reaction (R)-pantoate + beta-alanine + ATP = (R)-pantothenate + AMP + diphosphate + H(+). It functions in the pathway cofactor biosynthesis; (R)-pantothenate biosynthesis; (R)-pantothenate from (R)-pantoate and beta-alanine: step 1/1. Functionally, catalyzes the condensation of pantoate with beta-alanine in an ATP-dependent reaction via a pantoyl-adenylate intermediate. This Chlorobium phaeobacteroides (strain DSM 266 / SMG 266 / 2430) protein is Pantothenate synthetase.